Consider the following 29-residue polypeptide: Toxin II.9 (29 aa).

In terms of domain architecture, LCN-type CS-alpha/beta spans 2–29 (KDGYLVNKYTGCKVNCYKLGENKFCNRE).

This sequence belongs to the long (4 C-C) scorpion toxin superfamily. Sodium channel inhibitor family. Beta subfamily. In terms of tissue distribution, expressed by the venom gland.

The protein resides in the secreted. Its function is as follows. Binds to sodium channels (Nav) and shift the voltage of activation toward more negative potentials. This toxin is active on crustaceans. This chain is Toxin II.9, found in Centruroides limpidus (Mexican scorpion).